Consider the following 314-residue polypeptide: tRNA dimethylallyltransferase (314 aa).

Residue 40–47 coordinates ATP; that stretch reads GPTASGKS. 42 to 47 serves as a coordination point for substrate; sequence TASGKS.

This sequence belongs to the IPP transferase family. As to quaternary structure, monomer. It depends on Mg(2+) as a cofactor.

The enzyme catalyses adenosine(37) in tRNA + dimethylallyl diphosphate = N(6)-dimethylallyladenosine(37) in tRNA + diphosphate. Its function is as follows. Catalyzes the transfer of a dimethylallyl group onto the adenine at position 37 in tRNAs that read codons beginning with uridine, leading to the formation of N6-(dimethylallyl)adenosine (i(6)A). The chain is tRNA dimethylallyltransferase from Cereibacter sphaeroides (strain KD131 / KCTC 12085) (Rhodobacter sphaeroides).